A 309-amino-acid polypeptide reads, in one-letter code: Neuropeptide-like 1 (309 aa).

Residues 1-28 form the signal peptide; it reads MQAVLQSAHSSRRLMLLLSMLLNAAIQP. The propeptide occupies 29 to 99; the sequence is RSIIVSATDD…GEYPDYLEED (71 aa). Residues 126-147 are disordered; sequence GQLPTAEPGEDYGDADSGEPSE. Over residues 133–144 the composition is skewed to acidic residues; that stretch reads PGEDYGDADSGE. Tyr-164 bears the Tyrosine amide mark. Asn-182 bears the Asparagine amide mark.

MTYamide peptide: Expressed in the larval CNS (at protein level). NAP peptide: Expressed in the larval CNS (at protein level). IPNamide peptide: Expressed in the ventral ganglion of the third larval instar and adult brain (at protein level).

It is found in the secreted. Functionally, acts as a ligand for the receptor-type guanylate cyclase Gyc76C. Stimulates Gyc76c-dependent cGMP production and modulates the IMD innate immune pathway in response to salt stress by inducing nuclear translocation of NF-kappa-B protein Rel which leads to increased expression of the antimicrobial peptide diptericin. Does not appear to play a role in Gyc76C-mediated wing development. This chain is Neuropeptide-like 1 (Nplp1), found in Drosophila melanogaster (Fruit fly).